The following is a 274-amino-acid chain: NH(3)-dependent NAD(+) synthetase (274 aa).

Residue G46–S53 participates in ATP binding. D52 provides a ligand contact to Mg(2+). R140 is a binding site for deamido-NAD(+). ATP is bound at residue T160. E165 contacts Mg(2+). Deamido-NAD(+) is bound by residues K173 and D180. Residues K189 and T211 each contribute to the ATP site. H260 to K261 serves as a coordination point for deamido-NAD(+).

Belongs to the NAD synthetase family. In terms of assembly, homodimer.

The enzyme catalyses deamido-NAD(+) + NH4(+) + ATP = AMP + diphosphate + NAD(+) + H(+). It participates in cofactor biosynthesis; NAD(+) biosynthesis; NAD(+) from deamido-NAD(+) (ammonia route): step 1/1. Its function is as follows. Catalyzes the ATP-dependent amidation of deamido-NAD to form NAD. Uses ammonia as a nitrogen source. In Sodalis glossinidius (strain morsitans), this protein is NH(3)-dependent NAD(+) synthetase.